A 394-amino-acid polypeptide reads, in one-letter code: Chaperone protein DnaJ (394 aa).

The region spanning 6-71 is the J domain; sequence DYYEVLEVTK…DKRARYDQFG (66 aa). The CR-type zinc finger occupies 152 to 234; the sequence is GVEKKFKLKK…CGGEGIEYGE (83 aa). 8 residues coordinate Zn(2+): Cys-165, Cys-168, Cys-182, Cys-185, Cys-208, Cys-211, Cys-222, and Cys-225. CXXCXGXG motif repeat units follow at residues 165-172, 182-189, 208-215, and 222-229; these read CSHCHGTG, CPTCKGSG, CPTCNGEG, and CKVCGGEG.

Belongs to the DnaJ family. In terms of assembly, homodimer. Zn(2+) serves as cofactor.

Its subcellular location is the cytoplasm. Participates actively in the response to hyperosmotic and heat shock by preventing the aggregation of stress-denatured proteins and by disaggregating proteins, also in an autonomous, DnaK-independent fashion. Unfolded proteins bind initially to DnaJ; upon interaction with the DnaJ-bound protein, DnaK hydrolyzes its bound ATP, resulting in the formation of a stable complex. GrpE releases ADP from DnaK; ATP binding to DnaK triggers the release of the substrate protein, thus completing the reaction cycle. Several rounds of ATP-dependent interactions between DnaJ, DnaK and GrpE are required for fully efficient folding. Also involved, together with DnaK and GrpE, in the DNA replication of plasmids through activation of initiation proteins. This chain is Chaperone protein DnaJ, found in Bacteroides fragilis (strain YCH46).